A 165-amino-acid polypeptide reads, in one-letter code: SsrA-binding protein (165 aa).

The tract at residues 141 to 165 is disordered; the sequence is EDRRHAIAERETKREMDREISRRRR.

This sequence belongs to the SmpB family.

The protein resides in the cytoplasm. Its function is as follows. Required for rescue of stalled ribosomes mediated by trans-translation. Binds to transfer-messenger RNA (tmRNA), required for stable association of tmRNA with ribosomes. tmRNA and SmpB together mimic tRNA shape, replacing the anticodon stem-loop with SmpB. tmRNA is encoded by the ssrA gene; the 2 termini fold to resemble tRNA(Ala) and it encodes a 'tag peptide', a short internal open reading frame. During trans-translation Ala-aminoacylated tmRNA acts like a tRNA, entering the A-site of stalled ribosomes, displacing the stalled mRNA. The ribosome then switches to translate the ORF on the tmRNA; the nascent peptide is terminated with the 'tag peptide' encoded by the tmRNA and targeted for degradation. The ribosome is freed to recommence translation, which seems to be the essential function of trans-translation. This chain is SsrA-binding protein, found in Anaeromyxobacter sp. (strain Fw109-5).